Consider the following 260-residue polypeptide: Glutamate racemase (260 aa).

Substrate contacts are provided by residues 14 to 15 (DS) and 46 to 47 (YG). Cys77 (proton donor/acceptor) is an active-site residue. 78–79 (NT) contributes to the substrate binding site. Cys188 serves as the catalytic Proton donor/acceptor. 189-190 (TH) serves as a coordination point for substrate.

This sequence belongs to the aspartate/glutamate racemases family.

It catalyses the reaction L-glutamate = D-glutamate. It participates in cell wall biogenesis; peptidoglycan biosynthesis. Provides the (R)-glutamate required for cell wall biosynthesis. In Clostridium perfringens (strain SM101 / Type A), this protein is Glutamate racemase.